Consider the following 242-residue polypeptide: Triosephosphate isomerase (242 aa).

8–10 (NWK) lines the substrate pocket. The active-site Electrophile is the H98. The Proton acceptor role is filled by E167. Substrate contacts are provided by residues G173, S205, and 226 to 227 (GG).

This sequence belongs to the triosephosphate isomerase family. In terms of assembly, homodimer.

It is found in the cytoplasm. The enzyme catalyses D-glyceraldehyde 3-phosphate = dihydroxyacetone phosphate. It functions in the pathway carbohydrate biosynthesis; gluconeogenesis. It participates in carbohydrate degradation; glycolysis; D-glyceraldehyde 3-phosphate from glycerone phosphate: step 1/1. Involved in the gluconeogenesis. Catalyzes stereospecifically the conversion of dihydroxyacetone phosphate (DHAP) to D-glyceraldehyde-3-phosphate (G3P). In Mesomycoplasma hyopneumoniae (strain 232) (Mycoplasma hyopneumoniae), this protein is Triosephosphate isomerase.